A 38-amino-acid polypeptide reads, in one-letter code: Large ribosomal subunit protein bL36 (38 aa).

Belongs to the bacterial ribosomal protein bL36 family.

The polypeptide is Large ribosomal subunit protein bL36 (Myxococcus xanthus (strain DK1622)).